The following is a 354-amino-acid chain: Thiamine thiazole synthase 2, chloroplastic (354 aa).

The N-terminal 44 residues, 1 to 44 (MATTAASSLLKSSFAGSRLPSATRTTTPSSVAVATPRAGGGPIR), are a transit peptide targeting the chloroplast. The disordered stretch occupies residues 17-49 (SRLPSATRTTTPSSVAVATPRAGGGPIRASISS). Residues 20–32 (PSATRTTTPSSVA) show a composition bias toward polar residues. Substrate-binding positions include A97, 117-118 (EQ), G125, and V190. 2,3-didehydroalanine (Cys) is present on C219. Residues D221, H236, M288, and 298–300 (RMG) each bind substrate.

The protein belongs to the THI4 family. In terms of assembly, homooctamer. It depends on Fe cation as a cofactor. In terms of processing, during the catalytic reaction, a sulfide is transferred from Cys-219 to a reaction intermediate, generating a dehydroalanine residue. In terms of tissue distribution, highest expression in developing embryos and green leaves and a very low level expression seen in endosperm, roots, etiolated shoots and immature ears.

Its subcellular location is the plastid. It localises to the chloroplast. The enzyme catalyses [ADP-thiazole synthase]-L-cysteine + glycine + NAD(+) = [ADP-thiazole synthase]-dehydroalanine + ADP-5-ethyl-4-methylthiazole-2-carboxylate + nicotinamide + 3 H2O + 2 H(+). Involved in biosynthesis of the thiamine precursor thiazole. Catalyzes the conversion of NAD and glycine to adenosine diphosphate 5-(2-hydroxyethyl)-4-methylthiazole-2-carboxylic acid (ADT), an adenylated thiazole intermediate. The reaction includes an iron-dependent sulfide transfer from a conserved cysteine residue of the protein to a thiazole intermediate. The enzyme can only undergo a single turnover, which suggests it is a suicide enzyme. May have additional roles in adaptation to various stress conditions and in DNA damage tolerance. The protein is Thiamine thiazole synthase 2, chloroplastic of Zea mays (Maize).